The primary structure comprises 89 residues: Small ribosomal subunit protein uS15 (89 aa).

Residues 1 to 24 form a disordered region; the sequence is MSLDTTEKQQLINSHQTHATDTGS. Positions 8-24 are enriched in polar residues; sequence KQQLINSHQTHATDTGS.

This sequence belongs to the universal ribosomal protein uS15 family. In terms of assembly, part of the 30S ribosomal subunit. Forms a bridge to the 50S subunit in the 70S ribosome, contacting the 23S rRNA.

In terms of biological role, one of the primary rRNA binding proteins, it binds directly to 16S rRNA where it helps nucleate assembly of the platform of the 30S subunit by binding and bridging several RNA helices of the 16S rRNA. Its function is as follows. Forms an intersubunit bridge (bridge B4) with the 23S rRNA of the 50S subunit in the ribosome. The sequence is that of Small ribosomal subunit protein uS15 from Synechococcus sp. (strain CC9311).